Here is a 982-residue protein sequence, read N- to C-terminus: E3 ubiquitin-protein ligase CBL-B (982 aa).

The 4H stretch occupies residues 35–167; the sequence is PPKQAAADRR…KAIFPNGQFQ (133 aa). One can recognise a Cbl-PTB domain in the interval 35–343; the sequence is PPKQAAADRR…GRSYNPDLTG (309 aa). The tract at residues 168-240 is EF-hand-like; it reads GDNFRITKAD…FEFDIFTRLF (73 aa). Ca(2+)-binding residues include Asp221, Thr223, Asn225, Tyr227, and Glu232. An SH2-like region spans residues 241–343; that stretch reads QPWGSILRNW…GRSYNPDLTG (103 aa). A Phosphoserine; by PKC/PRKCQ modification is found at Ser282. Arg286 is a 4-O-phospho-L-tyrosine binding site. The linker stretch occupies residues 344–372; sequence LCEPTPHDHIKVTQEQYELYCEMGSTFQL. Phosphotyrosine is present on Tyr363. Residues 373-412 form an RING-type zinc finger; it reads CKICAENDKDVKIEPCGHLMCTSCLTAWQESDGQGCPFCR. The segment at 466–571 is disordered; sequence NVRKCTDRQN…PPPIPPDNRL (106 aa). Residues 473–486 show a composition bias toward polar residues; that stretch reads RQNSPVTSPGSSPL. Residues Ser476, Ser480, Ser484, Ser521, Ser525, and Ser529 each carry the phosphoserine modification. Residues 543-568 are interaction with VAV1; the sequence is PLPAPPPPLRDPPPPPPERPPPIPPD. The span at 544-567 shows a compositional bias: pro residues; that stretch reads LPAPPPPLRDPPPPPPERPPPIPP. Residue Ser634 is modified to Phosphoserine. Residues Tyr665 and Tyr709 each carry the phosphotyrosine modification. Disordered regions lie at residues 688–731 and 769–929; these read GPLA…NVKP and FDSA…EAAL. Positions 715 to 725 are enriched in polar residues; that stretch reads HPVSLNSQPSH. Residues 819 to 828 are compositionally biased toward pro residues; the sequence is PSLPPPPPPA. Low complexity predominate over residues 838–848; that stretch reads PPGSSSRPSSG. Residues 880–899 are compositionally biased toward polar residues; the sequence is VKTNRTSQDYDQLPSCSDGS. Tyr889 carries the post-translational modification Phosphotyrosine. The segment at 891–927 is interaction with SH3KBP1; the sequence is QLPSCSDGSQAPARPPKPRPRRTAPEIHHRKPHGPEA. Basic residues predominate over residues 906–922; it reads PKPRPRRTAPEIHHRKP. Positions 931 to 970 constitute a UBA domain; it reads NVDAKIAKLMGEGYAFEEVKRALEIAQNNVEVARSILREF.

As to quaternary structure, interacts with SH3 domain-containing proteins LCK, CRK and SORBS1. Interacts with LCP2 and ZAP70. Interacts with CBL. Interacts with SH3 domain-containing proteins VAV1, FYN, FGR, PLCG1, GRB2, CRKL, PIK3R1 and SH3KBP1/CIN85. Identified in heterotrimeric complexes with SH3KBP1/CIN85, CD2AP and ARHGEF7, where one CBLB peptide binds two copies of the other protein. Interacts with poly-ubiquitinated proteins. Dimerization is required for the binding of poly-ubiquitin, but not for the binding of mono-ubiquitin. Interacts with EGFR (phosphorylated). Interacts with IFT20. Post-translationally, phosphorylated on tyrosine and serine residues upon TCR or BCR activation, and upon various types of cell stimulation. Auto-ubiquitinated upon EGF-mediated cell activation or upon T-cell costimulation by CD28; which promotes proteasomal degradation. As to expression, expressed in placenta, heart, lung, kidney, spleen, ovary and testis, as well as fetal brain and liver and hematopoietic cell lines, but not in adult brain, liver, pancreas, salivary gland, or skeletal muscle. Present in lymphocytes (at protein level).

The protein resides in the cytoplasm. The catalysed reaction is S-ubiquitinyl-[E2 ubiquitin-conjugating enzyme]-L-cysteine + [acceptor protein]-L-lysine = [E2 ubiquitin-conjugating enzyme]-L-cysteine + N(6)-ubiquitinyl-[acceptor protein]-L-lysine.. The protein operates within protein modification; protein ubiquitination. E3 ubiquitin-protein ligase which accepts ubiquitin from specific E2 ubiquitin-conjugating enzymes, and transfers it to substrates, generally promoting their degradation by the proteasome. Negatively regulates TCR (T-cell receptor), BCR (B-cell receptor) and FCER1 (high affinity immunoglobulin epsilon receptor) signal transduction pathways. In naive T-cells, inhibits VAV1 activation upon TCR engagement and imposes a requirement for CD28 costimulation for proliferation and IL-2 production. Also acts by promoting PIK3R1/p85 ubiquitination, which impairs its recruitment to the TCR and subsequent activation. In activated T-cells, inhibits PLCG1 activation and calcium mobilization upon restimulation and promotes anergy. In B-cells, acts by ubiquitinating SYK and promoting its proteasomal degradation. Slightly promotes SRC ubiquitination. May be involved in EGFR ubiquitination and internalization. May be functionally coupled with the E2 ubiquitin-protein ligase UB2D3. In association with CBL, required for proper feedback inhibition of ciliary platelet-derived growth factor receptor-alpha (PDGFRA) signaling pathway via ubiquitination and internalization of PDGFRA. In Homo sapiens (Human), this protein is E3 ubiquitin-protein ligase CBL-B (CBLB).